The chain runs to 345 residues: Isocitrate lyase (345 aa).

58-60 (SGY) contacts substrate. D98 contributes to the Mg(2+) binding site. The active-site Proton acceptor is C135. Substrate is bound by residues 136–137 (GH), R170, 230–234 (NYSSS), and T260. A disordered region spans residues 318 to 345 (DPEARRRIEESEGFSEEQADPITSNDDD). The span at 328–345 (SEGFSEEQADPITSNDDD) shows a compositional bias: acidic residues.

Homotetramer or homotrimer. The cofactor is Mg(2+).

The enzyme catalyses D-threo-isocitrate = glyoxylate + succinate. The protein operates within carbohydrate metabolism; glyoxylate cycle; (S)-malate from isocitrate: step 1/2. In terms of biological role, involved in the metabolic adaptation in response to environmental changes. Catalyzes the reversible formation of succinate and glyoxylate from isocitrate, a key step of the glyoxylate cycle, which operates as an anaplerotic route for replenishing the tricarboxylic acid cycle during growth on fatty acid substrates. The protein is Isocitrate lyase (aceA) of Haloferax volcanii (strain ATCC 29605 / DSM 3757 / JCM 8879 / NBRC 14742 / NCIMB 2012 / VKM B-1768 / DS2) (Halobacterium volcanii).